We begin with the raw amino-acid sequence, 353 residues long: Polyprenal reductase 2 (353 aa).

The next 6 helical transmembrane spans lie at 11 to 31 (PLLCFAWIAATLPIIAAALPI), 78 to 98 (FMHFYVVGVLATTILLLAIWF), 175 to 195 (MHIVGYLTGLFYYVAAPLSLA), 234 to 254 (PLLKLGWTQWIGAVIFIWGSL), 291 to 308 (YLAELVIYFGMLVASGAE), and 313 to 335 (WFLFIFVITNLSFAAVETYNWYL).

It belongs to the steroid 5-alpha reductase family. Polyprenal reductase subfamily.

The protein localises to the cell membrane. It carries out the reaction a di-trans,poly-cis-dolichal + NADP(+) = a di-trans,poly-cis-polyprenal + NADPH + H(+). It functions in the pathway protein modification; protein glycosylation. Plays a key role in early steps of protein N-linked glycosylation by being involved in the conversion of polyprenol into dolichol. Acts as a polyprenal reductase that mediates the reduction of polyprenal into dolichal in a NADP-dependent mechanism. Dolichols are required for the synthesis of dolichol-linked monosaccharides and the oligosaccharide precursor used for N-glycosylation. The sequence is that of Polyprenal reductase 2 from Oryza sativa subsp. japonica (Rice).